Here is a 501-residue protein sequence, read N- to C-terminus: Ammonium transporter 1 member 1 (501 aa).

10 helical membrane passes run 8-28, 46-66, 81-101, 128-148, 152-172, 199-219, 243-263, 333-353, 366-386, and 419-439; these read LAVLLGPNATAAANYICGQLG, LLFSAYLVFSMQLGFAMLCAG, VLDAAAGGLFYYLFGYAFAFG, FLYQWAFAIAAAGITSGSIAE, FVAYLIYSSFLTGFVYPVVSH, FAGSGVVHMVGGIAGLWGALI, LVVLGTFLLWFGWYGFNPGSF, VVEPWAAIICGFVAALVLLGC, LEAAQLHGGCGAWGLIFTALF, and LIQIIVITGWVSATMGTLFFI. Thr-460 bears the Phosphothreonine mark. 4 positions are modified to phosphoserine: Ser-475, Ser-488, Ser-490, and Ser-492.

The protein belongs to the ammonia transporter channel (TC 1.A.11.2) family. As to quaternary structure, self interacts. Interacts with the receptor protein kinases CEPR2, At2g28990 and PAM74. Highly expressed in roots. Expressed in root tips, root hairs, root epidermis, rhizodermis, cortex and pericycle. Expressed in leaves epidermal and mesophyll cells.

It localises to the cell membrane. Its function is as follows. High affinity ammonium transporter probably involved in ammonium uptake from the soil, long-distance transport to the shoots and re-uptake of apoplastic ammonium that derives from photorespiration in shoots. Contributes with AMT1-3 to the overall ammonium uptake capacity in roots under nitrogen-deficiency conditions. This Arabidopsis thaliana (Mouse-ear cress) protein is Ammonium transporter 1 member 1 (AMT1-1).